The chain runs to 201 residues: Glutathione peroxidase 1, mitochondrial (201 aa).

Residues 1-27 (MLLTRKNVAVRPARAARRDVRAMSLLG) constitute a mitochondrion transit peptide. Sec75 is a catalytic residue. A non-standard amino acid (selenocysteine) is located at residue Sec75.

Its subcellular location is the mitochondrion. The enzyme catalyses 2 glutathione + H2O2 = glutathione disulfide + 2 H2O. In terms of biological role, may constitute a glutathione peroxidase-like protective system against oxidative stresses. Hydrogen peroxide, tert-butyl hydroperoxide and cumene, but not phosphatidylcholine hydroperoxide, can act as acceptors. The protein is Glutathione peroxidase 1, mitochondrial of Chlamydomonas reinhardtii (Chlamydomonas smithii).